Here is a 175-residue protein sequence, read N- to C-terminus: General odorant-binding protein 84a (175 aa).

A signal peptide spans 1–24 (MYSALVRACAVIAFLILSPNCARA). 2 disulfides stabilise this stretch: C103/C151 and C140/C160.

In terms of tissue distribution, present only in a small number of hairs scattered over the surface of the funiculus.

It localises to the secreted. This chain is General odorant-binding protein 84a (Obp84a), found in Drosophila melanogaster (Fruit fly).